The primary structure comprises 480 residues: Glutamate--tRNA ligase (480 aa).

Positions 21 to 31 match the 'HIGH' region motif; the sequence is PSPTGYLHVGG. The Zn(2+) site is built by cysteine 110, cysteine 112, cysteine 137, and histidine 139. The 'KMSKS' region motif lies at 248–252; that stretch reads KLSKR. Lysine 251 is a binding site for ATP.

The protein belongs to the class-I aminoacyl-tRNA synthetase family. Glutamate--tRNA ligase type 1 subfamily. As to quaternary structure, monomer. The cofactor is Zn(2+).

It is found in the cytoplasm. It carries out the reaction tRNA(Glu) + L-glutamate + ATP = L-glutamyl-tRNA(Glu) + AMP + diphosphate. Functionally, catalyzes the attachment of glutamate to tRNA(Glu) in a two-step reaction: glutamate is first activated by ATP to form Glu-AMP and then transferred to the acceptor end of tRNA(Glu). This Haemophilus influenzae (strain ATCC 51907 / DSM 11121 / KW20 / Rd) protein is Glutamate--tRNA ligase.